The chain runs to 386 residues: Succinate--CoA ligase [ADP-forming] subunit beta (386 aa).

The region spanning 9–244 (KEILRKYGVS…LDEEDPKEIE (236 aa)) is the ATP-grasp domain. ATP is bound by residues Lys-46, 53-55 (GRG), Glu-99, Cys-102, and Glu-107. Mg(2+) is bound by residues Asn-199 and Asp-213. Substrate-binding positions include Asn-264 and 321-323 (GIM).

It belongs to the succinate/malate CoA ligase beta subunit family. In terms of assembly, heterotetramer of two alpha and two beta subunits. Mg(2+) serves as cofactor.

The enzyme catalyses succinate + ATP + CoA = succinyl-CoA + ADP + phosphate. The catalysed reaction is GTP + succinate + CoA = succinyl-CoA + GDP + phosphate. The protein operates within carbohydrate metabolism; tricarboxylic acid cycle; succinate from succinyl-CoA (ligase route): step 1/1. Its function is as follows. Succinyl-CoA synthetase functions in the citric acid cycle (TCA), coupling the hydrolysis of succinyl-CoA to the synthesis of either ATP or GTP and thus represents the only step of substrate-level phosphorylation in the TCA. The beta subunit provides nucleotide specificity of the enzyme and binds the substrate succinate, while the binding sites for coenzyme A and phosphate are found in the alpha subunit. The protein is Succinate--CoA ligase [ADP-forming] subunit beta of Bacillus pumilus (strain SAFR-032).